Here is a 287-residue protein sequence, read N- to C-terminus: Cyclopropane mycolic acid synthase 1 (287 aa).

S-adenosyl-L-methionine is bound by residues 33-34 (YS), 68-76 (LLDVGCGWG), 94-99 (TLSKNQ), and 123-124 (WE). C269 is a catalytic residue.

Belongs to the CFA/CMAS family. Homodimer.

It localises to the cytoplasm. It catalyses the reaction a 1-acyl-2-(9Z)-enoyl-sn-glycero-3-phospholipid + S-adenosyl-L-methionine = a 1-acyl-2-(9-cyclopronane)-acyl-sn-glycero-3-phospholipid + S-adenosyl-L-homocysteine + H(+). Its pathway is lipid metabolism; mycolic acid biosynthesis. Functionally, catalyzes the conversion of a double bond to a cyclopropane ring at the distal position of an alpha mycolic acid via the transfer of a methylene group from S-adenosyl-L-methionine. Cyclopropanated mycolic acids are key factors participating in cell envelope permeability, host immunomodulation and persistence. This Mycobacterium tuberculosis (strain CDC 1551 / Oshkosh) protein is Cyclopropane mycolic acid synthase 1 (cmaA1).